Consider the following 305-residue polypeptide: Oxygen-dependent coproporphyrinogen-III oxidase (305 aa).

Residue Ser-92 coordinates substrate. The a divalent metal cation site is built by His-96 and His-106. The active-site Proton donor is His-106. Substrate is bound at residue 108-110 (NVR). 2 residues coordinate a divalent metal cation: His-145 and His-175. The segment at 239–274 (YVEFNLLFDRGTLFGLQSGGRAESILISLPPLVRWE) is important for dimerization. 257–259 (GGR) serves as a coordination point for substrate.

This sequence belongs to the aerobic coproporphyrinogen-III oxidase family. Homodimer. Requires a divalent metal cation as cofactor.

Its subcellular location is the cytoplasm. It catalyses the reaction coproporphyrinogen III + O2 + 2 H(+) = protoporphyrinogen IX + 2 CO2 + 2 H2O. It participates in porphyrin-containing compound metabolism; protoporphyrin-IX biosynthesis; protoporphyrinogen-IX from coproporphyrinogen-III (O2 route): step 1/1. Functionally, involved in the heme biosynthesis. Catalyzes the aerobic oxidative decarboxylation of propionate groups of rings A and B of coproporphyrinogen-III to yield the vinyl groups in protoporphyrinogen-IX. The polypeptide is Oxygen-dependent coproporphyrinogen-III oxidase (Xylella fastidiosa (strain M12)).